A 123-amino-acid chain; its full sequence is DNA-directed RNA polymerase I subunit RPA12 (123 aa).

Zn(2+) contacts are provided by Cys-17, Cys-20, Cys-35, Cys-38, Cys-84, and Cys-87. The C4-type zinc-finger motif lies at 17-38; that stretch reads CPDCGSVLPLPGIQDTVICSRC. The TFIIS-type zinc-finger motif lies at 80–120; sequence IDRRCPRCGHEGMAYHTRQMRSADEGQTVFYTCINCKFQEK. The Hairpin signature appears at 103-104; that stretch reads DE. The Zn(2+) site is built by Cys-112 and Cys-115.

This sequence belongs to the archaeal RpoM/eukaryotic RPA12/RPB9/RPC11 RNA polymerase family. Component of the RNA polymerase I (Pol I) complex consisting of 13 subunits: a ten-subunit catalytic core composed of POLR1A/RPA1, POLR1B/RPA2, POLR1C/RPAC1, POLR1D/RPAC2, POLR1H/RPA12, POLR2E/RPABC1, POLR2F/RPABC2, POLR2H/RPABC3, POLR2K/RPABC4 and POLR2L/RPABC5; a mobile stalk subunit POLR1F/RPA43 protruding from the core and additional subunits homologous to general transcription factors POLR1E/RPA49 and POLR1G/RPA34. Part of Pol I pre-initiation complex (PIC), in which Pol I core assembles with RRN3 and promoter-bound UTBF and SL1/TIF-IB complex.

It localises to the nucleus. Its subcellular location is the nucleolus. Core component of RNA polymerase I (Pol I), a DNA-dependent RNA polymerase which synthesizes ribosomal RNA precursors using the four ribonucleoside triphosphates as substrates. Can mediate Pol I proofreading of the nascent RNA transcript. Anchors into the Pol I active site to monitor transcription fidelity and cleave mis-incorporated 5'-ribonucleotides. The protein is DNA-directed RNA polymerase I subunit RPA12 of Mus musculus (Mouse).